Consider the following 713-residue polypeptide: Cytosolic endo-beta-N-acetylglucosaminidase (713 aa).

A disordered region spans residues 1 to 36; it reads MIARKRKSNGSETTSGKIPKDDVSSESCLDQPADES. The region spanning 270–362 is the BRCT domain; the sequence is FFDACDGFFT…DFRQNQDKFW (93 aa).

It belongs to the glycosyl hydrolase 85 family.

Its subcellular location is the cytoplasm. It localises to the cytosol. The enzyme catalyses an N(4)-(oligosaccharide-(1-&gt;3)-[oligosaccharide-(1-&gt;6)]-beta-D-Man-(1-&gt;4)-beta-D-GlcNAc-(1-&gt;4)-alpha-D-GlcNAc)-L-asparaginyl-[protein] + H2O = an oligosaccharide-(1-&gt;3)-[oligosaccharide-(1-&gt;6)]-beta-D-Man-(1-&gt;4)-D-GlcNAc + N(4)-(N-acetyl-beta-D-glucosaminyl)-L-asparaginyl-[protein]. In terms of biological role, endoglycosidase that releases N-glycans from glycoproteins by cleaving the beta-1,4-glycosidic bond in the N,N'-diacetylchitobiose core. Involved in the processing of free oligosaccharides in the cytosol. This is Cytosolic endo-beta-N-acetylglucosaminidase (engase) from Danio rerio (Zebrafish).